Here is a 318-residue protein sequence, read N- to C-terminus: Isoflavone reductase (318 aa).

NADP(+)-binding positions include 11–17 (GATGAIG), arginine 36, and lysine 44. Lysine 144 serves as the catalytic Proton acceptor. Residue arginine 148 participates in NADP(+) binding.

The protein belongs to the NmrA-type oxidoreductase family. Isoflavone reductase subfamily.

It carries out the reaction (3R)-vestitone + NADP(+) = 2'-hydroxyformononetin + NADPH + 2 H(+). It functions in the pathway phytoalexin biosynthesis; pterocarpan phytoalexin biosynthesis. Reduces achiral isoflavones to chiral isoflavanones during the biosynthesis of chiral pterocarpan phytoalexins. The reduction product (sophrol) is a third isomer, which represents the penultimate intermediate in the synthesis of the phytoalexin (+)-pisatin, the major phytoalexin in pea. The sequence is that of Isoflavone reductase (IFR) from Pisum sativum (Garden pea).